Here is a 387-residue protein sequence, read N- to C-terminus: Galanin receptor type 2 (387 aa).

Residues 1 to 28 lie on the Extracellular side of the membrane; that stretch reads MNVSGCPGAGNASQAGGGGGWHPEAVIV. Asn2 and Asn11 each carry an N-linked (GlcNAc...) asparagine glycan. The chain crosses the membrane as a helical span at residues 29-49; it reads PLLFALIFLVGTVGNTLVLAV. Over 50–60 the chain is Cytoplasmic; it reads LLRGGQAVSTT. Residues 61-81 traverse the membrane as a helical segment; the sequence is NLFILNLGVADLCFILCCVPF. Topologically, residues 82-99 are extracellular; the sequence is QATIYTLDGWVFGSLLCK. An intrachain disulfide couples Cys98 to Cys175. The chain crosses the membrane as a helical span at residues 100–121; the sequence is AVHFLIFLTMHASSFTLAAVSL. Residues 122–141 lie on the Cytoplasmic side of the membrane; it reads DRYLAIRYPLHSRELRTPRN. A helical transmembrane segment spans residues 142–162; it reads ALAAIGLIWGLSLLFSGPYLS. The Extracellular portion of the chain corresponds to 163–187; that stretch reads YYRQSQLANLTVCHPAWSAPRRRAM. The chain crosses the membrane as a helical span at residues 188–208; that stretch reads DICTFVFSYLLPVLVLGLTYA. Over 209 to 237 the chain is Cytoplasmic; it reads RTLRYLWRAVDPVAAGSGARRAKRKVTRM. Residues 238–258 form a helical membrane-spanning segment; sequence ILIVAALFCLCWMPHHALILC. The Extracellular portion of the chain corresponds to 259–260; that stretch reads VW. A helical membrane pass occupies residues 261–281; it reads FGQFPLTRATYALRILSHLVS. Topologically, residues 282 to 387 are cytoplasmic; the sequence is YANSCVNPIV…GDSILTVDVA (106 aa).

It belongs to the G-protein coupled receptor 1 family. As to expression, expressed abundantly within the central nervous system in both hypothalamus and hippocampus. In peripheral tissues, the strongest expression was observed in heart, kidney, liver, and small intestine.

It is found in the cell membrane. In terms of biological role, receptor for the hormone galanin and GALP. Receptor for the hormone spexin-1. The activity of this receptor is mediated by G proteins that activate the phospholipase C/protein kinase C pathway (via G(q)) and that inhibit adenylyl cyclase (via G(i)). The polypeptide is Galanin receptor type 2 (GALR2) (Homo sapiens (Human)).